Here is a 172-residue protein sequence, read N- to C-terminus: dCTP deaminase, dUMP-forming (172 aa).

Residues 93–98 (RSSVGR), Asp111, 119–121 (TLE), Gln138, and Tyr151 contribute to the dCTP site. Glu121 acts as the Proton donor/acceptor in catalysis.

This sequence belongs to the dCTP deaminase family. As to quaternary structure, homotrimer.

The enzyme catalyses dCTP + 2 H2O = dUMP + NH4(+) + diphosphate. Its pathway is pyrimidine metabolism; dUMP biosynthesis; dUMP from dCTP: step 1/1. In terms of biological role, bifunctional enzyme that catalyzes both the deamination of dCTP to dUTP and the hydrolysis of dUTP to dUMP without releasing the toxic dUTP intermediate. This is dCTP deaminase, dUMP-forming from Hathewaya histolytica (Clostridium histolyticum).